The primary structure comprises 339 residues: Very-long-chain 3-oxoacyl-CoA reductase (339 aa).

Residues 21 to 41 (WTTFLLALGSFNALRIIYQTL) traverse the membrane as a helical segment. The NADP(+) site is built by valine 67, asparagine 96, aspartate 121, asparagine 148, tyrosine 215, lysine 219, valine 248, and serine 250. The active-site Proton acceptor is tyrosine 215. The active-site Lowers pKa of active site Tyr is the lysine 219.

Belongs to the short-chain dehydrogenases/reductases (SDR) family.

It is found in the endoplasmic reticulum membrane. The catalysed reaction is a very-long-chain (3R)-3-hydroxyacyl-CoA + NADP(+) = a very-long-chain 3-oxoacyl-CoA + NADPH + H(+). It participates in lipid metabolism; fatty acid biosynthesis. Its function is as follows. Component of the microsomal membrane bound fatty acid elongation system, which produces the 26-carbon very long-chain fatty acids (VLCFA) from palmitate. Catalyzes the reduction of the 3-ketoacyl-CoA intermediate that is formed in each cycle of fatty acid elongation. VLCFAs serve as precursors for ceramide and sphingolipids. This Coprinopsis cinerea (strain Okayama-7 / 130 / ATCC MYA-4618 / FGSC 9003) (Inky cap fungus) protein is Very-long-chain 3-oxoacyl-CoA reductase.